Here is a 501-residue protein sequence, read N- to C-terminus: ATP synthase subunit alpha (501 aa).

Position 169 to 176 (Gly-169 to Thr-176) interacts with ATP.

It belongs to the ATPase alpha/beta chains family. F-type ATPases have 2 components, CF(1) - the catalytic core - and CF(0) - the membrane proton channel. CF(1) has five subunits: alpha(3), beta(3), gamma(1), delta(1), epsilon(1). CF(0) has three main subunits: a(1), b(2) and c(9-12). The alpha and beta chains form an alternating ring which encloses part of the gamma chain. CF(1) is attached to CF(0) by a central stalk formed by the gamma and epsilon chains, while a peripheral stalk is formed by the delta and b chains.

It is found in the cell inner membrane. It catalyses the reaction ATP + H2O + 4 H(+)(in) = ADP + phosphate + 5 H(+)(out). Functionally, produces ATP from ADP in the presence of a proton gradient across the membrane. The alpha chain is a regulatory subunit. This Campylobacter jejuni subsp. jejuni serotype O:6 (strain 81116 / NCTC 11828) protein is ATP synthase subunit alpha.